A 203-amino-acid chain; its full sequence is Hydra actinoporin-like toxin 2 (203 aa).

An N-terminal signal peptide occupies residues 1-21 (MLSYLCFGCFLVSASLEIACG). Positions 175 to 177 (RGG) match the Cell attachment site motif.

It belongs to the actinoporin family. HALT subfamily. As to quaternary structure, octamer or nonamer in membranes. Monomer in the soluble state. In vitro, interacts with folate receptor alpha (of target organism). As to expression, strongly expressed in the gland and mucous cells in the endoderm.

The protein localises to the nematocyst. It localises to the secreted. Its subcellular location is the target cell membrane. Pore-forming protein that forms hydrophilic pores and causes cytolysis. Compared to equinatoxin-2 (AC P61914), it reveals lower cytolysis activity (5-12-fold difference, tested on erythrocytes), a larger pore size (probably 2-3 nm) and different affinity to membrane lipids (100-fold lower affinity to sphingomyelin). Binds to sulfatides (SFT). Shows cytolytic activity on HeLa cells, with a different potency than its paralogs (from most potent to less potent: HALT-4&gt;HALT-6~HALT-1&gt;HALT-3&gt;HALT-7&gt;HALT-2). Pore formation is a multi-step process that involves specific recognition of membrane lipid by a protein aromatic residues rich region, firm binding to the membrane (mainly driven by hydrophobic interactions) accompanied by the transfer of the N-terminal region to the lipid-water interface and finally pore formation after oligomerization of monomers. In vitro, binds to the folate receptor alpha (FOLR1), a GPI-anchored membrane protein that plays a major role in the uptake of folate/folic acid into cells via endocytosis, suggesting a possible involvement of this receptor in the mechanism of HALT-1-induced cell lysis. In vivo, does not cause visible paralysis in larvae of the blowfly Sarcophaga faculata, the most common arthropod prey of Hydra. The polypeptide is Hydra actinoporin-like toxin 2 (Hydra vulgaris (Hydra)).